We begin with the raw amino-acid sequence, 279 residues long: Probable endonuclease 4 (279 aa).

Positions 66, 106, 142, 175, 178, 212, 225, 227, and 257 each coordinate Zn(2+).

It belongs to the AP endonuclease 2 family. It depends on Zn(2+) as a cofactor.

It carries out the reaction Endonucleolytic cleavage to 5'-phosphooligonucleotide end-products.. Functionally, endonuclease IV plays a role in DNA repair. It cleaves phosphodiester bonds at apurinic or apyrimidinic (AP) sites, generating a 3'-hydroxyl group and a 5'-terminal sugar phosphate. This chain is Probable endonuclease 4, found in Moorella thermoacetica (strain ATCC 39073 / JCM 9320).